An 86-amino-acid chain; its full sequence is Small ribosomal subunit protein bS20 (86 aa).

Residues 1 to 18 are compositionally biased toward basic and acidic residues; sequence MANIKSQEKRIRTNERAR. The disordered stretch occupies residues 1 to 25; the sequence is MANIKSQEKRIRTNERARLRNQATK.

Belongs to the bacterial ribosomal protein bS20 family.

In terms of biological role, binds directly to 16S ribosomal RNA. This Mycobacteroides abscessus (strain ATCC 19977 / DSM 44196 / CCUG 20993 / CIP 104536 / JCM 13569 / NCTC 13031 / TMC 1543 / L948) (Mycobacterium abscessus) protein is Small ribosomal subunit protein bS20.